Consider the following 108-residue polypeptide: Malonate decarboxylase acyl carrier protein (108 aa).

Ser-35 is modified (O-(phosphoribosyl dephospho-coenzyme A)serine).

It belongs to the MdcC family. In terms of processing, covalently binds the prosthetic group of malonate decarboxylase.

The protein localises to the cytoplasm. Its function is as follows. Subunit of malonate decarboxylase, it is an acyl carrier protein to which acetyl and malonyl thioester residues are bound via a 2'-(5''-phosphoribosyl)-3'-dephospho-CoA prosthetic group and turn over during the catalytic mechanism. The protein is Malonate decarboxylase acyl carrier protein of Burkholderia cepacia (Pseudomonas cepacia).